The chain runs to 466 residues: Soluble pyridine nucleotide transhydrogenase (466 aa).

36-45 (ERYQNVGGGC) lines the FAD pocket.

This sequence belongs to the class-I pyridine nucleotide-disulfide oxidoreductase family. As to quaternary structure, homooligomer; probable homooctamer. Requires FAD as cofactor.

It is found in the cytoplasm. The catalysed reaction is NAD(+) + NADPH = NADH + NADP(+). Its function is as follows. Conversion of NADPH, generated by peripheral catabolic pathways, to NADH, which can enter the respiratory chain for energy generation. This is Soluble pyridine nucleotide transhydrogenase from Escherichia coli O6:H1 (strain CFT073 / ATCC 700928 / UPEC).